Consider the following 745-residue polypeptide: Phosphoribosylformylglycinamidine synthase subunit PurL (745 aa).

The active site involves His-47. Tyr-50 and Lys-90 together coordinate ATP. Glu-92 contacts Mg(2+). Residues 93 to 96 (SHNH) and Arg-115 each bind substrate. His-94 serves as the catalytic Proton acceptor. Position 116 (Asp-116) interacts with Mg(2+). Substrate is bound at residue Gln-240. Asp-268 provides a ligand contact to Mg(2+). 312 to 314 (ESQ) lines the substrate pocket. Residues Asn-501 and Gly-538 each contribute to the ATP site. Asn-539 contacts Mg(2+). Residue Ser-541 coordinates substrate.

It belongs to the FGAMS family. As to quaternary structure, monomer. Part of the FGAM synthase complex composed of 1 PurL, 1 PurQ and 2 PurS subunits.

It is found in the cytoplasm. It catalyses the reaction N(2)-formyl-N(1)-(5-phospho-beta-D-ribosyl)glycinamide + L-glutamine + ATP + H2O = 2-formamido-N(1)-(5-O-phospho-beta-D-ribosyl)acetamidine + L-glutamate + ADP + phosphate + H(+). It functions in the pathway purine metabolism; IMP biosynthesis via de novo pathway; 5-amino-1-(5-phospho-D-ribosyl)imidazole from N(2)-formyl-N(1)-(5-phospho-D-ribosyl)glycinamide: step 1/2. Its function is as follows. Part of the phosphoribosylformylglycinamidine synthase complex involved in the purines biosynthetic pathway. Catalyzes the ATP-dependent conversion of formylglycinamide ribonucleotide (FGAR) and glutamine to yield formylglycinamidine ribonucleotide (FGAM) and glutamate. The FGAM synthase complex is composed of three subunits. PurQ produces an ammonia molecule by converting glutamine to glutamate. PurL transfers the ammonia molecule to FGAR to form FGAM in an ATP-dependent manner. PurS interacts with PurQ and PurL and is thought to assist in the transfer of the ammonia molecule from PurQ to PurL. The chain is Phosphoribosylformylglycinamidine synthase subunit PurL from Leptospira borgpetersenii serovar Hardjo-bovis (strain JB197).